The primary structure comprises 256 residues: Large ribosomal subunit protein eL8A (256 aa).

A disordered region spans residues 1 to 37; the sequence is MAPGKKVAPAPFGAKSTKSNKTRNPLTHSTPKNFGIG. Polar residues predominate over residues 16–32; sequence STKSNKTRNPLTHSTPK.

It belongs to the eukaryotic ribosomal protein eL8 family. Component of the large ribosomal subunit (LSU). Mature yeast ribosomes consist of a small (40S) and a large (60S) subunit. The 40S small subunit contains 1 molecule of ribosomal RNA (18S rRNA) and 33 different proteins (encoded by 57 genes). The large 60S subunit contains 3 rRNA molecules (25S, 5.8S and 5S rRNA) and 46 different proteins (encoded by 81 genes).

It is found in the cytoplasm. Its function is as follows. Component of the ribosome, a large ribonucleoprotein complex responsible for the synthesis of proteins in the cell. The small ribosomal subunit (SSU) binds messenger RNAs (mRNAs) and translates the encoded message by selecting cognate aminoacyl-transfer RNA (tRNA) molecules. The large subunit (LSU) contains the ribosomal catalytic site termed the peptidyl transferase center (PTC), which catalyzes the formation of peptide bonds, thereby polymerizing the amino acids delivered by tRNAs into a polypeptide chain. The nascent polypeptides leave the ribosome through a tunnel in the LSU and interact with protein factors that function in enzymatic processing, targeting, and the membrane insertion of nascent chains at the exit of the ribosomal tunnel. In Saccharomyces cerevisiae (strain ATCC 204508 / S288c) (Baker's yeast), this protein is Large ribosomal subunit protein eL8A.